A 324-amino-acid polypeptide reads, in one-letter code: Brorin (324 aa).

The signal sequence occupies residues 1-27; it reads MPSSSAMAVGALSSSLLVTCCLMVALC. The disordered stretch occupies residues 37–126; it reads AQAPEQPGQE…TPQGEPPAAA (90 aa). Composition is skewed to basic and acidic residues over residues 44-56 and 64-78; these read GQEK…RDSP and RASR…DWKS. Low complexity predominate over residues 92–107; the sequence is KQKQAWAAQGGSAKAA. Residues 114 to 116 carry the Mediates cell adhesion motif; sequence RGD. VWFC domains lie at 152-211 and 215-273; these read KGCV…PQCK and NYCE…PICK.

As to quaternary structure, peripherally associated with AMPAR complex. AMPAR complex consists of an inner core made of 4 pore-forming GluA/GRIA proteins (GRIA1, GRIA2, GRIA3 and GRIA4) and 4 major auxiliary subunits arranged in a twofold symmetry. One of the two pairs of distinct binding sites is occupied either by CNIH2, CNIH3 or CACNG2, CACNG3. The other harbors CACNG2, CACNG3, CACNG4, CACNG8 or GSG1L. This inner core of AMPAR complex is complemented by outer core constituents binding directly to the GluA/GRIA proteins at sites distinct from the interaction sites of the inner core constituents. Outer core constituents include at least PRRT1, PRRT2, CKAMP44/SHISA9, FRRS1L and NRN1. The proteins of the inner and outer core serve as a platform for other, more peripherally associated AMPAR constituents, including VWC2. Alone or in combination, these auxiliary subunits control the gating and pharmacology of the AMPAR complex and profoundly impact their biogenesis and protein processing. In terms of tissue distribution, predominantly expressed in the brain (at protein level). It is expressed in the neurons but not the glial cells.

It localises to the secreted. The protein localises to the extracellular space. Its subcellular location is the extracellular matrix. The protein resides in the basement membrane. It is found in the synapse. Its function is as follows. BMP antagonist which may play a role in neural development. Promotes cell adhesion. This Mus musculus (Mouse) protein is Brorin (Vwc2).